The chain runs to 547 residues: Cytochrome P450 monooxygenase fsoD (547 aa).

Residues aspartate 3–leucine 23 traverse the membrane as a helical segment. Cysteine 490 provides a ligand contact to heme.

This sequence belongs to the cytochrome P450 family. Heme serves as cofactor.

It localises to the membrane. It catalyses the reaction isomotiol + reduced [NADPH--hemoprotein reductase] + O2 = 2alpha-hydroxyisomotiol + oxidized [NADPH--hemoprotein reductase] + H2O + H(+). It participates in secondary metabolite biosynthesis; terpenoid biosynthesis. In terms of biological role, cytochrome P450 monooxygenase; part of the gene cluster that mediates the biosynthesis of the enfumafungin-type antibiotic, fuscoatroside. Within the pathway, fsoD catalyzes the hydroxylation at position C2 of isomotiol to produce 2-alpha-hydroxy-isomotiol. FsoD may also hydroxylate the intermediates 3-O-(beta-D-glucopyranosyl)-isomotiol and 2-deacetoxy-fuscoatroside at the same position C2. The fuscoatroside biosynthesis is initiated by the cyclization of 2,3(S)-oxidosqualene through FsoA's terpene cyclase (TC) domain, leading to the formation of the fernane skeleton isomotiol, harboring a fernane triterpene skeleton with a C8-C9 double bond. Subsequently, C2-alpha-hydroxylation mediated by fsoD results in the production of 2-alpha-hydroxy-isomotiol, which is further acetylated by fsoF. The glycosyltransferase (GT) domain of FsoA may convert isomotiol, 2-alpha-hydroxy-isomotiol, and the acetylated derivative of 2-alpha-hydroxy-isomotiol into their corresponding glycosides 3-O-(beta-D-glucopyranosyl)-isomotiol, 3-O-(beta-D-glucopyranosyl)-2-alpha-hydroxy-isomotiol, and 3-O-(beta-D-glucopyranosyl)-2-alpha-acetoxy-isomotiol, which then undergo oxidative cleavage under the action of fsoE to form s 2-deacetoxy-fuscoatroside, 2-deacetyl-fuscoatroside, and fuscoatroside, respectively. Although hydroxylation followed by acetylation of 3-O-(beta-D-glucopyranosyl)-isomotiol and 2-deacetoxy-fuscoatroside by fsoD and fsoF could not be ruled out, this process is likely to occur with difficulty due to bulky steric hindrance caused by the presence of a glycan at C3 in these compounds. Interestingly, fsoE can also utilize the aglycones isomotiol and 2-alpha-hydroxy-isomotiol as substrates to generate 19-beta-hydroxy-isomotiol and 2-alpha,19-beta-dihydroxy-isomotiol, respectively. These reactions occur with lower efficiency. Finally, fsoE can further convert 2-alpha,19-beta-dihydroxy-isomotiol into 2-alpha-hydroxy-ismotiol-19-one and 2-alpha-hydroxy-ismotiol-19-one into 2-deacetyl-3-deglucopyranosyl-fuscoatroside. This Humicola fuscoatra protein is Cytochrome P450 monooxygenase fsoD.